Here is a 92-residue protein sequence, read N- to C-terminus: MARSTWKGPFVDGYLLKKAEKSRESGKNEVIKIWSRRSTILPQFVGLTFGVYNGKKHVPVNVTEEMIGQKFGEYSPTRTYYGHAADKKAKRK.

This sequence belongs to the universal ribosomal protein uS19 family.

Its function is as follows. Protein S19 forms a complex with S13 that binds strongly to the 16S ribosomal RNA. The chain is Small ribosomal subunit protein uS19 from Cereibacter sphaeroides (strain ATCC 17029 / ATH 2.4.9) (Rhodobacter sphaeroides).